We begin with the raw amino-acid sequence, 171 residues long: Co-chaperone protein HscB (171 aa).

The J domain maps to 2–74 (DYFTLFGLPA…LARAEYLLSL (73 aa)).

Belongs to the HscB family. Interacts with HscA and stimulates its ATPase activity. Interacts with IscU.

Co-chaperone involved in the maturation of iron-sulfur cluster-containing proteins. Seems to help targeting proteins to be folded toward HscA. The polypeptide is Co-chaperone protein HscB (Enterobacter sp. (strain 638)).